The following is a 447-amino-acid chain: Tubulin beta-1 chain (447 aa).

Residues Q11, E69, S138, G142, T143, G144, N204, and N226 each coordinate GTP. Position 69 (E69) interacts with Mg(2+).

This sequence belongs to the tubulin family. In terms of assembly, dimer of alpha and beta chains. A typical microtubule is a hollow water-filled tube with an outer diameter of 25 nm and an inner diameter of 15 nM. Alpha-beta heterodimers associate head-to-tail to form protofilaments running lengthwise along the microtubule wall with the beta-tubulin subunit facing the microtubule plus end conferring a structural polarity. Microtubules usually have 13 protofilaments but different protofilament numbers can be found in some organisms and specialized cells. Requires Mg(2+) as cofactor.

It is found in the cytoplasm. The protein localises to the cytoskeleton. Functionally, tubulin is the major constituent of microtubules, a cylinder consisting of laterally associated linear protofilaments composed of alpha- and beta-tubulin heterodimers. Microtubules grow by the addition of GTP-tubulin dimers to the microtubule end, where a stabilizing cap forms. Below the cap, tubulin dimers are in GDP-bound state, owing to GTPase activity of alpha-tubulin. This chain is Tubulin beta-1 chain (benA), found in Emericella nidulans (strain FGSC A4 / ATCC 38163 / CBS 112.46 / NRRL 194 / M139) (Aspergillus nidulans).